The sequence spans 1297 residues: DNA-directed RNA polymerase subunit beta' (1297 aa).

Residues C60, C62, C75, and C78 each contribute to the Zn(2+) site. The Mg(2+) site is built by D535, D537, and D539. Residues C883, C961, C968, and C971 each contribute to the Zn(2+) site.

Belongs to the RNA polymerase beta' chain family. In terms of assembly, the RNAP catalytic core consists of 2 alpha, 1 beta, 1 beta' and 1 omega subunit. When a sigma factor is associated with the core the holoenzyme is formed, which can initiate transcription. The cofactor is Mg(2+). Zn(2+) serves as cofactor.

It carries out the reaction RNA(n) + a ribonucleoside 5'-triphosphate = RNA(n+1) + diphosphate. In terms of biological role, DNA-dependent RNA polymerase catalyzes the transcription of DNA into RNA using the four ribonucleoside triphosphates as substrates. This Salinispora arenicola (strain CNS-205) protein is DNA-directed RNA polymerase subunit beta'.